Reading from the N-terminus, the 347-residue chain is Serpentine receptor class beta-2 (347 aa).

A run of 7 helical transmembrane segments spans residues 27 to 47, 62 to 82, 108 to 128, 146 to 166, 194 to 214, 246 to 266, and 288 to 308; these read IAQLWTFVVSILAIPALYIFL, FLLVCYFSASFVFAVLLAFLF, GNLSLTLFMTIQMIMPLGFSI, FLGPLLVFTLIGIDLALLYHV, FWELLYAEIGNFICNCIFLLV, LIVSFTHLLFVGWYLIATIFV, and ITVPTYNLTIVFVGIKALSFM.

Belongs to the nematode receptor-like protein srb family.

The protein localises to the membrane. The sequence is that of Serpentine receptor class beta-2 (srb-2) from Caenorhabditis elegans.